The chain runs to 251 residues: Isoprenyl transferase (251 aa).

The active site involves Asp-31. Asp-31 lines the Mg(2+) pocket. Substrate-binding positions include 32-35 (GNGR), Trp-36, Arg-44, His-48, and 76-78 (STE). The active-site Proton acceptor is Asn-79. Residues Trp-80, Arg-82, Arg-199, and 205-207 (RIS) each bind substrate. A Mg(2+)-binding site is contributed by Glu-218.

The protein belongs to the UPP synthase family. In terms of assembly, homodimer. Mg(2+) serves as cofactor.

Its function is as follows. Catalyzes the condensation of isopentenyl diphosphate (IPP) with allylic pyrophosphates generating different type of terpenoids. The chain is Isoprenyl transferase from Thermosynechococcus vestitus (strain NIES-2133 / IAM M-273 / BP-1).